Reading from the N-terminus, the 593-residue chain is Maternal uncoordinated protein 2 (593 aa).

Belongs to the SCC4/mau-2 family. May heterodimerize with scc-2/SCC2 to form the cohesin loading complex.

The protein resides in the nucleus. It localises to the nucleoplasm. It is found in the cytoplasm. Its function is as follows. Plays an important role in the loading of the cohesin complex on to DNA. Forms a heterodimeric complex (also known as cohesin loading complex) with scc-2/SCC2 which mediates the loading of the cohesin complex onto chromatin. Required for normal development until the fourth larval stage. Functions cell autonomously to guide migrations during the development of the nervous system. Participates in the guidance of mechanosensory neuron AVM by a slt-1-independent mechanism. Regulates chromosome segregation in early embryos. The sequence is that of Maternal uncoordinated protein 2 from Caenorhabditis elegans.